The chain runs to 462 residues: Lipase A (462 aa).

The first 21 residues, 1–21, serve as a signal peptide directing secretion; sequence MRVSLRSITSLLAAATAAVLA. C122 and C294 are joined by a disulfide. Residues S205, D355, and H387 each act as charge relay system in the active site. Residues C371 and C415 are joined by a disulfide bond.

It belongs to the AB hydrolase superfamily. Lipase family. Monomer.

The protein resides in the secreted. It carries out the reaction a triacylglycerol + H2O = a diacylglycerol + a fatty acid + H(+). Hydrolyzes triglycerides, with a preference for substrates with short-chain lengths (C4 to C8). Has the highest activity with tributyrin (C4), followed by tricaproin (C6) and tricaprylin (C8). Can also hydrolyze vinylacetate (C2) and triolein (C18), but with lower efficiency. Has no activity with tripalmitin (C16). This chain is Lipase A, found in Moesziomyces aphidis (Pseudozyma aphidis).